A 344-amino-acid chain; its full sequence is Protein-glutamate methylesterase/protein-glutamine glutaminase (344 aa).

Positions 7–124 (RVLVVDDSAF…SLTFRQVAPE (118 aa)) constitute a Response regulatory domain. At Asp58 the chain carries 4-aspartylphosphate. Residues 154–344 (PAVSGKIVVI…KIPEKLIELV (191 aa)) form the CheB-type methylesterase domain. Residues Ser166, His193, and Asp289 contribute to the active site.

This sequence belongs to the CheB family. In terms of processing, phosphorylated by CheA. Phosphorylation of the N-terminal regulatory domain activates the methylesterase activity.

The protein resides in the cytoplasm. It carries out the reaction [protein]-L-glutamate 5-O-methyl ester + H2O = L-glutamyl-[protein] + methanol + H(+). It catalyses the reaction L-glutaminyl-[protein] + H2O = L-glutamyl-[protein] + NH4(+). Its function is as follows. Involved in chemotaxis. Part of a chemotaxis signal transduction system that modulates chemotaxis in response to various stimuli. Catalyzes the demethylation of specific methylglutamate residues introduced into the chemoreceptors (methyl-accepting chemotaxis proteins or MCP) by CheR. Also mediates the irreversible deamidation of specific glutamine residues to glutamic acid. This chain is Protein-glutamate methylesterase/protein-glutamine glutaminase, found in Thermotoga maritima (strain ATCC 43589 / DSM 3109 / JCM 10099 / NBRC 100826 / MSB8).